Reading from the N-terminus, the 442-residue chain is HTH-type transcriptional regulator NorG (442 aa).

An HTH gntR-type domain is found at 2–46; the sequence is KIPPQRQLAIQYNVNRVTIIKSIELLEAEGFIYTKVGSGTYVNDY. Residues 6 to 25 constitute a DNA-binding region (H-T-H motif); sequence QRQLAIQYNVNRVTIIKSIE. Position 288 is an N6-(pyridoxal phosphate)lysine (Lys-288).

The protein in the C-terminal section; belongs to the class-I pyridoxal-phosphate-dependent aminotransferase family. Requires pyridoxal 5'-phosphate as cofactor.

In terms of biological role, positively regulates the expression of the NorB efflux pump and negatively regulates the expression of the AbcA efflux pump. Binds specifically to the promoters of norA, norB and norC and abcA genes. Could also have an aminotransferase activity. This Staphylococcus aureus (strain Mu50 / ATCC 700699) protein is HTH-type transcriptional regulator NorG (norG).